The sequence spans 286 residues: Phosphate import ATP-binding protein PstB (286 aa).

Residues 40-281 (VVAKDFSIFY…PRDRMTEDYI (242 aa)) enclose the ABC transporter domain. 72 to 79 (GPSGCGKS) contacts ATP.

The protein belongs to the ABC transporter superfamily. Phosphate importer (TC 3.A.1.7) family. As to quaternary structure, the complex is composed of two ATP-binding proteins (PstB), two transmembrane proteins (PstC and PstA) and a solute-binding protein (PstS).

Its subcellular location is the cell inner membrane. The enzyme catalyses phosphate(out) + ATP + H2O = ADP + 2 phosphate(in) + H(+). Part of the ABC transporter complex PstSACB involved in phosphate import. Responsible for energy coupling to the transport system. This chain is Phosphate import ATP-binding protein PstB, found in Chlorobium luteolum (strain DSM 273 / BCRC 81028 / 2530) (Pelodictyon luteolum).